Reading from the N-terminus, the 330-residue chain is Aspartate--ammonia ligase (330 aa).

This sequence belongs to the class-II aminoacyl-tRNA synthetase family. AsnA subfamily.

Its subcellular location is the cytoplasm. The enzyme catalyses L-aspartate + NH4(+) + ATP = L-asparagine + AMP + diphosphate + H(+). It participates in amino-acid biosynthesis; L-asparagine biosynthesis; L-asparagine from L-aspartate (ammonia route): step 1/1. This chain is Aspartate--ammonia ligase, found in Photorhabdus laumondii subsp. laumondii (strain DSM 15139 / CIP 105565 / TT01) (Photorhabdus luminescens subsp. laumondii).